The following is a 164-amino-acid chain: Nucleotide-binding protein EF_1165 (164 aa).

This sequence belongs to the YajQ family.

Functionally, nucleotide-binding protein. This chain is Nucleotide-binding protein EF_1165, found in Enterococcus faecalis (strain ATCC 700802 / V583).